The chain runs to 387 residues: Succinate--CoA ligase [ADP-forming] subunit beta (387 aa).

An ATP-grasp domain is found at 9–244 (KEVLRKFGVA…LNEEEPSEIE (236 aa)). ATP is bound by residues Lys46, 53–55 (GRG), Glu99, Cys102, and Glu107. Mg(2+) contacts are provided by Asn199 and Asp213. Residues Asn264 and 321-323 (GIM) contribute to the substrate site.

The protein belongs to the succinate/malate CoA ligase beta subunit family. In terms of assembly, heterotetramer of two alpha and two beta subunits. Mg(2+) is required as a cofactor.

It catalyses the reaction succinate + ATP + CoA = succinyl-CoA + ADP + phosphate. It carries out the reaction GTP + succinate + CoA = succinyl-CoA + GDP + phosphate. Its pathway is carbohydrate metabolism; tricarboxylic acid cycle; succinate from succinyl-CoA (ligase route): step 1/1. In terms of biological role, succinyl-CoA synthetase functions in the citric acid cycle (TCA), coupling the hydrolysis of succinyl-CoA to the synthesis of either ATP or GTP and thus represents the only step of substrate-level phosphorylation in the TCA. The beta subunit provides nucleotide specificity of the enzyme and binds the substrate succinate, while the binding sites for coenzyme A and phosphate are found in the alpha subunit. The polypeptide is Succinate--CoA ligase [ADP-forming] subunit beta (Bdellovibrio bacteriovorus (strain ATCC 15356 / DSM 50701 / NCIMB 9529 / HD100)).